A 383-amino-acid polypeptide reads, in one-letter code: Succinyl-diaminopimelate desuccinylase (383 aa).

H73 is a Zn(2+) binding site. Residue D75 is part of the active site. Residue D107 coordinates Zn(2+). E141 (proton acceptor) is an active-site residue. Zn(2+) contacts are provided by E142, E170, and H356.

It belongs to the peptidase M20A family. DapE subfamily. As to quaternary structure, homodimer. It depends on Zn(2+) as a cofactor. The cofactor is Co(2+).

It carries out the reaction N-succinyl-(2S,6S)-2,6-diaminopimelate + H2O = (2S,6S)-2,6-diaminopimelate + succinate. It participates in amino-acid biosynthesis; L-lysine biosynthesis via DAP pathway; LL-2,6-diaminopimelate from (S)-tetrahydrodipicolinate (succinylase route): step 3/3. Its function is as follows. Catalyzes the hydrolysis of N-succinyl-L,L-diaminopimelic acid (SDAP), forming succinate and LL-2,6-diaminopimelate (DAP), an intermediate involved in the bacterial biosynthesis of lysine and meso-diaminopimelic acid, an essential component of bacterial cell walls. This chain is Succinyl-diaminopimelate desuccinylase, found in Pseudomonas fluorescens (strain ATCC BAA-477 / NRRL B-23932 / Pf-5).